Reading from the N-terminus, the 296-residue chain is NAD kinase (296 aa).

Asp72 acts as the Proton acceptor in catalysis. Residues 72 to 73, 146 to 147, Arg157, Lys174, Asp176, 187 to 192, and Gln247 contribute to the NAD(+) site; these read DG, ND, and TAYALS.

This sequence belongs to the NAD kinase family. The cofactor is a divalent metal cation.

The protein resides in the cytoplasm. It catalyses the reaction NAD(+) + ATP = ADP + NADP(+) + H(+). Involved in the regulation of the intracellular balance of NAD and NADP, and is a key enzyme in the biosynthesis of NADP. Catalyzes specifically the phosphorylation on 2'-hydroxyl of the adenosine moiety of NAD to yield NADP. In Pseudomonas fluorescens (strain Pf0-1), this protein is NAD kinase.